Consider the following 304-residue polypeptide: MDSVSKISRKINLFTKHIGTYSKINTSTTYYATVKLLVNNPCNIDQDTIFNLLEYSVIILDLDGFYQIIKHHNDIFRDNYRLIRYILYIAYQNHHQDCSVYYEMIKYLIDYGLDITFNDNFAIKLASLCHENILKLVIDNGGDVHADNEFPICLAANHGRLSCVKLLVDCGVDPFCFDNIVIKLASIDYYDNVVEYMVSIGADINAGNNYVLRYAIKNLDKKMIELAINAGASINDISPNDITHIIKYQSPTIMNILVEYGLDISTVNFCSKIRPERKKFVDNLISRGVDPTIIAYLSYACESD.

ANK repeat units follow at residues Leu-82–Phe-117, Asn-118–Ala-146, Asp-147–Cys-176, Asp-178–Ala-206, Gly-207–Asp-236, and Ser-238–Thr-266.

The protein is Putative ankyrin repeat protein R602 of Acanthamoeba polyphaga (Amoeba).